Here is a 102-residue protein sequence, read N- to C-terminus: Small ribosomal subunit protein uS10 (102 aa).

This sequence belongs to the universal ribosomal protein uS10 family. As to quaternary structure, part of the 30S ribosomal subunit.

Functionally, involved in the binding of tRNA to the ribosomes. In Bifidobacterium longum (strain DJO10A), this protein is Small ribosomal subunit protein uS10.